The sequence spans 207 residues: Small ribosomal subunit protein uS10m (207 aa).

The transit peptide at 1 to 24 directs the protein to the mitochondrion; that stretch reads MLSVFGLRTVARCNSTLASGGARA.

Belongs to the universal ribosomal protein uS10 family. Part of the mitochondrial small ribosomal subunit.

The protein localises to the mitochondrion. Involved in mitochondrial genome encoded proteins translation. Involved in the binding of tRNA to the ribosomes. This is Small ribosomal subunit protein uS10m (RSM10) from Eremothecium gossypii (strain ATCC 10895 / CBS 109.51 / FGSC 9923 / NRRL Y-1056) (Yeast).